A 230-amino-acid polypeptide reads, in one-letter code: Ribosomal RNA small subunit methyltransferase G (230 aa).

S-adenosyl-L-methionine-binding positions include Gly91, Leu96, 142-143 (VE), and Arg161.

Belongs to the methyltransferase superfamily. RNA methyltransferase RsmG family.

Its subcellular location is the cytoplasm. It catalyses the reaction guanosine(527) in 16S rRNA + S-adenosyl-L-methionine = N(7)-methylguanosine(527) in 16S rRNA + S-adenosyl-L-homocysteine. Functionally, specifically methylates the N7 position of guanine in position 527 of 16S rRNA. In Burkholderia pseudomallei (strain K96243), this protein is Ribosomal RNA small subunit methyltransferase G.